A 353-amino-acid chain; its full sequence is Carbamoyl phosphate synthase arginine-specific small chain (353 aa).

The CPSase stretch occupies residues 1–162; sequence MEGYLVLEDG…EISTFGDGNK (162 aa). L-glutamine is bound by residues Ser44, Gly210, and Gly212. The Glutamine amidotransferase type-1 domain occupies 163–349; the sequence is HIALIDFGYK…LKNVIPARRE (187 aa). Cys237 acts as the Nucleophile in catalysis. 4 residues coordinate L-glutamine: Leu238, Gln241, Asn279, and Tyr282. Catalysis depends on residues His322 and Glu324.

This sequence belongs to the CarA family. Composed of two chains; the small (or glutamine) chain promotes the hydrolysis of glutamine to ammonia, which is used by the large (or ammonia) chain to synthesize carbamoyl phosphate. Tetramer of heterodimers (alpha,beta)4.

The catalysed reaction is hydrogencarbonate + L-glutamine + 2 ATP + H2O = carbamoyl phosphate + L-glutamate + 2 ADP + phosphate + 2 H(+). It carries out the reaction L-glutamine + H2O = L-glutamate + NH4(+). The protein operates within amino-acid biosynthesis; L-arginine biosynthesis; carbamoyl phosphate from bicarbonate: step 1/1. Its function is as follows. Small subunit of the glutamine-dependent carbamoyl phosphate synthetase (CPSase). CPSase catalyzes the formation of carbamoyl phosphate from the ammonia moiety of glutamine, carbonate, and phosphate donated by ATP, constituting the first step of the biosynthetic pathway leading to arginine and/or urea. The small subunit (glutamine amidotransferase) binds and cleaves glutamine to supply the large subunit with the substrate ammonia. The chain is Carbamoyl phosphate synthase arginine-specific small chain from Bacillus subtilis (strain 168).